The sequence spans 379 residues: Alcohol dehydrogenase 2 (379 aa).

8 residues coordinate Zn(2+): Cys-47, Thr-49, His-69, Cys-99, Cys-102, Cys-105, Cys-113, and Cys-177. Positions 49 and 69 each coordinate an alcohol. Thr-49 is an NAD(+) binding site. NAD(+) contacts are provided by residues Gly-202 to Gly-207, Asp-226, Lys-231, Thr-272, Val-295, Val-295 to Val-297, Phe-322, and Arg-372.

It belongs to the zinc-containing alcohol dehydrogenase family. Homodimer. It depends on Zn(2+) as a cofactor.

It localises to the cytoplasm. The catalysed reaction is a primary alcohol + NAD(+) = an aldehyde + NADH + H(+). It carries out the reaction a secondary alcohol + NAD(+) = a ketone + NADH + H(+). This Oryza sativa subsp. indica (Rice) protein is Alcohol dehydrogenase 2 (ADH2).